The primary structure comprises 488 residues: MDLDQISETLSSVAEEEPLTMFLLDKLYAIREKIKQVPFSIVRLCHVYCMLIKYNASNNNCILGRKLIEEMQQFLCGTRVDGSEDISMDLSELCKLYDYCPLLCSALCRAPCVSVNKLFKIVERETRGQSENPLWHALRKYTVTATKLYDIYTTRCFLEYKGQQFFGEAVIYGAKHERVIRHLVATFYVKREVKETLGLLLDPSSGVFGASLDACFGISFNEDGFLMVKEKALIFEIKFKYKYLRDKEDHFVSELLKNPTEKSFSDFILSHPVPVIEFRERGKIPSSREYLMTYDFQYRPQRKLRTCPTPAILAPHIKQLLCLNETQKSTVIVFDCKSDLCEQKLSVFQKAVFTVNVFVNPKHRYFFQSLLQQYVMTQFYINDHNNPEYIESTEVPSVHIVTAFFRRRTEEERSLHLVIDETEYIEEEIPLALIVTPVAPNPEFTCCVITDICNLWENNICKQTSLQVWAQSAVNQYLAACVRKPKTP.

This sequence belongs to the herpesviridae alkaline nuclease family. In terms of assembly, interacts with major DNA-binding protein; this interaction increases the nuclease processivity of the alkaline exonuclease.

It is found in the host nucleus. It localises to the host cytoplasm. Functionally, plays a role in processing non linear or branched viral DNA intermediates in order to promote the production of mature packaged unit-length linear progeny viral DNA molecules. Exhibits endonuclease and exonuclease activities and accepts both double-stranded and single-stranded DNA as substrate. Exonuclease digestion of DNA is in the 5'-&gt; 3' direction and the products are 5'-monophosphate nucleosides. Additionally, forms a recombinase with the major DNA-binding protein, which displays strand exchange activity. The sequence is that of Alkaline nuclease (U70) from Homo sapiens (Human).